A 23-amino-acid polypeptide reads, in one-letter code: Aurein-4.1 (23 aa).

Belongs to the frog skin active peptide (FSAP) family. Aurein subfamily. In terms of tissue distribution, expressed by the skin dorsal glands.

The protein resides in the secreted. Functionally, has no antimicrobial or anticancer activity. The protein is Aurein-4.1 of Ranoidea aurea (Green and golden bell frog).